A 326-amino-acid polypeptide reads, in one-letter code: Biotin synthase (326 aa).

Residues 48 to 277 (FGAGKVDLCS…SARIRMAGGR (230 aa)) enclose the Radical SAM core domain. [4Fe-4S] cluster-binding residues include Cys66, Cys70, and Cys73. Residues Ser110, Cys142, Cys202, and Arg272 each contribute to the [2Fe-2S] cluster site.

The protein belongs to the radical SAM superfamily. Biotin synthase family. As to quaternary structure, homodimer. It depends on [4Fe-4S] cluster as a cofactor. [2Fe-2S] cluster is required as a cofactor.

It catalyses the reaction (4R,5S)-dethiobiotin + (sulfur carrier)-SH + 2 reduced [2Fe-2S]-[ferredoxin] + 2 S-adenosyl-L-methionine = (sulfur carrier)-H + biotin + 2 5'-deoxyadenosine + 2 L-methionine + 2 oxidized [2Fe-2S]-[ferredoxin]. It participates in cofactor biosynthesis; biotin biosynthesis; biotin from 7,8-diaminononanoate: step 2/2. Its function is as follows. Catalyzes the conversion of dethiobiotin (DTB) to biotin by the insertion of a sulfur atom into dethiobiotin via a radical-based mechanism. This is Biotin synthase from Heliobacterium modesticaldum (strain ATCC 51547 / Ice1).